A 281-amino-acid polypeptide reads, in one-letter code: Voltage-dependent L-type calcium channel subunit alpha-1S (281 aa).

One copy of the III repeat lies at 1-8 (VGFVIVTF). The interval 1-17 (VGFVIVTFQEQGESEYK) is dihydropyridine binding. One copy of the IV repeat lies at 45 to 281 (NPYQYQIWYV…TCGTGFAYFY (237 aa)). A helical transmembrane segment spans residues 59-80 (YFEYLMFFLIMLNTICLGMQHY). Residue Asn-81 is glycosylated (N-linked (GlcNAc...) asparagine). A helical transmembrane segment spans residues 89–110 (VSDILNVAFTVLFTLEMILKLM). A helical membrane pass occupies residues 121–140 (PWNVFDFLIVIGSIIDVILS). A helical transmembrane segment spans residues 153–171 (ITFFRLFRVMRLVKLLSRG). The helical transmembrane segment at 190–210 (YVALLIVMLFFIYAVIGMQMF) threads the bilayer. An intramembrane region (pore-forming) is located at residues 233–251 (AVLLLFRCATGEAWQEILL). Residues 242-245 (TGEA) carry the Selectivity filter of repeat IV motif. The dihydropyridine binding stretch occupies residues 258 to 281 (RCDPESDYAEGEEYTCGTGFAYFY). A disulfide bridge links Cys-259 with Cys-273. Residues 270 to 281 (EYTCGTGFAYFY) form a phenylalkylamine binding region.

It belongs to the calcium channel alpha-1 subunit (TC 1.A.1.11) family. CACNA1S subfamily. As to quaternary structure, component of a calcium channel complex consisting of a pore-forming alpha subunit (CACNA1S) and the ancillary subunits CACNB1 or CACNB2, CACNG1 and CACNA2D1. The channel complex contains alpha, beta, gamma and delta subunits in a 1:1:1:1 ratio, i.e. it contains either CACNB1 or CACNB2. CACNA1S channel activity is modulated by the auxiliary subunits (CACNB1 or CACNB2, CACNG1 and CACNA2D1). Interacts with DYSF and JSRP1. Interacts with RYR1. Interacts with CALM. The alpha-1S subunit is found in two isoforms in the skeletal muscle: a minor form of 212 kDa containing the complete amino acid sequence, and a major form of 190 kDa derived from the full-length form by post-translational proteolysis close to Phe-1690. Post-translationally, both the minor and major forms are phosphorylated in vitro by PKA. Phosphorylation by PKA activates the calcium channel.

Its subcellular location is the cell membrane. The protein resides in the sarcolemma. It is found in the T-tubule. The enzyme catalyses Ca(2+)(in) = Ca(2+)(out). Channel activity is blocked by dihydropyridines (DHP), phenylalkylamines, and by benzothiazepines. Functionally, pore-forming, alpha-1S subunit of the voltage-gated calcium channel that gives rise to L-type calcium currents in skeletal muscle. Calcium channels containing the alpha-1S subunit play an important role in excitation-contraction coupling in skeletal muscle via their interaction with RYR1, which triggers Ca(2+) release from the sarcplasmic reticulum and ultimately results in muscle contraction. Long-lasting (L-type) calcium channels belong to the 'high-voltage activated' (HVA) group. The sequence is that of Voltage-dependent L-type calcium channel subunit alpha-1S (CACNA1S) from Gallus gallus (Chicken).